Consider the following 191-residue polypeptide: Outer membrane lipoprotein DolP (191 aa).

The N-terminal stretch at 1 to 18 (MKAFSPLAVLISALLLQG) is a signal peptide. Cys-19 carries N-palmitoyl cysteine lipidation. The S-diacylglycerol cysteine moiety is linked to residue Cys-19. BON domains follow at residues 46–115 (DDGT…RQGQ) and 124–191 (NDTW…TYIK).

It belongs to the lipoprotein DolP family.

It is found in the cell outer membrane. Its function is as follows. Plays an important role in maintaining outer membrane integrity. Contributes to virulence. In Salmonella typhimurium (strain LT2 / SGSC1412 / ATCC 700720), this protein is Outer membrane lipoprotein DolP.